The primary structure comprises 266 residues: DNA repair protein RecO (266 aa).

Belongs to the RecO family.

In terms of biological role, involved in DNA repair and RecF pathway recombination. The sequence is that of DNA repair protein RecO from Synechococcus elongatus (strain ATCC 33912 / PCC 7942 / FACHB-805) (Anacystis nidulans R2).